Here is a 718-residue protein sequence, read N- to C-terminus: Serine/threonine-protein kinase PAK 5 (718 aa).

Disordered regions lie at residues 1–29 (MFGKKKKKIEISGPSNFEHRVHTGFDPQE), 96–119 (RSNSLRKESPPTPDQGAASRIQGH), 226–245 (SPLDYSFQLTPSRTAGTSRC), 264–296 (YDRRPKSSYLHQTSPQPAMRQRSKSGSGLQEPM), and 339–371 (VFSPPLSGSDTYPRGPTKLPQSQSKVGYSSSSH). A CRIB domain is found at 11–24 (ISGPSNFEHRVHTG). The segment at 25–447 (FDPQEQKFTG…VVSPGDPREY (423 aa)) is linker. Residue Ser-104 is modified to Phosphoserine. Phosphothreonine is present on Thr-107. A compositionally biased stretch (polar residues) spans 226 to 244 (SPLDYSFQLTPSRTAGTSR). The span at 359 to 371 (QSQSKVGYSSSSH) shows a compositional bias: low complexity. The 252-residue stretch at 448-699 (LDNFIKIGEG…AQELLGHPFL (252 aa)) folds into the Protein kinase domain. ATP-binding positions include 454 to 462 (IGEGSTGIV) and Lys-477. Catalysis depends on Asp-567, which acts as the Proton acceptor.

The protein belongs to the protein kinase superfamily. STE Ser/Thr protein kinase family. STE20 subfamily. In terms of assembly, interacts tightly with GTP-bound but not GDP-bound CDC42/p21 and RAC1. Interacts with MARK2, leading to inhibit MARK2 independently of kinase activity. Interacts with RHOD and RHOH. Autophosphorylated when activated by CDC42/p21.

The protein localises to the mitochondrion. It is found in the cytoplasm. It localises to the nucleus. The enzyme catalyses L-seryl-[protein] + ATP = O-phospho-L-seryl-[protein] + ADP + H(+). It carries out the reaction L-threonyl-[protein] + ATP = O-phospho-L-threonyl-[protein] + ADP + H(+). Serine/threonine protein kinase that plays a role in a variety of different signaling pathways including cytoskeleton regulation, cell migration, proliferation or cell survival. Activation by various effectors including growth factor receptors or active CDC42 and RAC1 results in a conformational change and a subsequent autophosphorylation on several serine and/or threonine residues. Phosphorylates the proto-oncogene RAF and stimulates its kinase activity. Promotes cell survival by phosphorylating the BCL2 antagonist of cell death BAD. Phosphorylates CTNND1, probably to regulate cytoskeletal organization and cell morphology. Keeps microtubules stable through MARK2 inhibition and destabilizes the F-actin network leading to the disappearance of stress fibers and focal adhesions. The sequence is that of Serine/threonine-protein kinase PAK 5 (Pak5) from Rattus norvegicus (Rat).